The following is a 207-amino-acid chain: GTP cyclohydrolase-2 (207 aa).

49–53 (RTHSE) contacts GTP. Zn(2+) contacts are provided by Cys54, Cys65, and Cys67. GTP is bound by residues Gln70, 92-94 (EGR), and Thr114. Residue Asp126 is the Proton acceptor of the active site. Residue Arg128 is the Nucleophile of the active site. GTP contacts are provided by Thr149 and Lys154.

It belongs to the GTP cyclohydrolase II family. Zn(2+) serves as cofactor.

The enzyme catalyses GTP + 4 H2O = 2,5-diamino-6-hydroxy-4-(5-phosphoribosylamino)-pyrimidine + formate + 2 phosphate + 3 H(+). Its pathway is cofactor biosynthesis; riboflavin biosynthesis; 5-amino-6-(D-ribitylamino)uracil from GTP: step 1/4. In terms of biological role, catalyzes the conversion of GTP to 2,5-diamino-6-ribosylamino-4(3H)-pyrimidinone 5'-phosphate (DARP), formate and pyrophosphate. This chain is GTP cyclohydrolase-2, found in Hahella chejuensis (strain KCTC 2396).